A 401-amino-acid polypeptide reads, in one-letter code: Renin-2 (401 aa).

The N-terminal stretch at 1–25 (MDRRRMPLWALLLLWSPCTFSLPTG) is a signal peptide. A propeptide spans 26–63 (TTFERIPLKKMPSVREILEERGVDMTRLSAEWDVFTKR) (activation peptide). The Peptidase A1 domain maps to 83–398 (YYGEIGIGTP…DRHNNRIGFA (316 aa)). Residue D101 is part of the active site. 2 disulfides stabilise this stretch: C114–C121 and C277–C281. Residue D286 is part of the active site. C320 and C357 form a disulfide bridge.

This sequence belongs to the peptidase A1 family. As to quaternary structure, dimer of a heavy chain and a light chain joined by a disulfide bond. As to expression, submandibular gland.

Its subcellular location is the secreted. It catalyses the reaction Cleavage of Leu-|-Xaa bond in angiotensinogen to generate angiotensin I.. Renin is a highly specific endopeptidase, related to pepsin, whose only known function is to generate angiotensin I from angiotensinogen in the plasma, initiating a cascade of reactions that produce an elevation of blood pressure and increased sodium retention by the kidney. The chain is Renin-2 from Mus musculus (Mouse).